The chain runs to 326 residues: Thioredoxin reductase (326 aa).

FAD is bound at residue 40-47; it reads TGNNKGGQ. A disulfide bond links Cys-141 and Cys-144. 291-300 contributes to the FAD binding site; sequence DVIDHVYKQA.

It belongs to the class-II pyridine nucleotide-disulfide oxidoreductase family. In terms of assembly, homodimer. The cofactor is FAD.

It is found in the cytoplasm. It carries out the reaction [thioredoxin]-dithiol + NADP(+) = [thioredoxin]-disulfide + NADPH + H(+). This is Thioredoxin reductase (trxB) from Buchnera aphidicola subsp. Baizongia pistaciae (strain Bp).